Here is a 626-residue protein sequence, read N- to C-terminus: Glutamine--fructose-6-phosphate aminotransferase [isomerizing] (626 aa).

Cys-2 serves as the catalytic Nucleophile; for GATase activity. The Glutamine amidotransferase type-2 domain maps to 2-222 (CGIVGYIGPQ…NGELARLTPT (221 aa)). SIS domains are found at residues 293 to 441 (LPPS…QRQS) and 471 to 616 (YIEA…VDQP). Catalysis depends on Lys-621, which acts as the For Fru-6P isomerization activity.

In terms of assembly, homodimer.

It is found in the cytoplasm. The catalysed reaction is D-fructose 6-phosphate + L-glutamine = D-glucosamine 6-phosphate + L-glutamate. Its function is as follows. Catalyzes the first step in hexosamine metabolism, converting fructose-6P into glucosamine-6P using glutamine as a nitrogen source. The sequence is that of Glutamine--fructose-6-phosphate aminotransferase [isomerizing] from Thermosynechococcus vestitus (strain NIES-2133 / IAM M-273 / BP-1).